Consider the following 966-residue polypeptide: Regulator of G-protein signaling 3 (966 aa).

One can recognise a PDZ domain in the interval glutamine 18–valine 95. Residues threonine 115–valine 135 form a disordered region. Residue arginine 167 is modified to Omega-N-methylarginine. Disordered stretches follow at residues glutamate 403–valine 618 and tyrosine 637–asparagine 704. Composition is skewed to polar residues over residues proline 527–proline 548 and serine 576–glycine 594. The segment covering glycine 649–asparagine 675 has biased composition (acidic residues). A compositionally biased stretch (basic and acidic residues) spans tyrosine 676–serine 686. A phosphoserine mark is found at serine 712, serine 715, serine 747, and serine 776. Residues phenylalanine 806 to proline 830 form a disordered region. Residues lysine 820–proline 830 are compositionally biased toward basic and acidic residues. Residues serine 841–leucine 966 form the RGS domain.

As to quaternary structure, binds the GNB1-GNG2 heterodimer. Binds EFNB1 and EFNB2. Post-translationally, phosphorylated by cyclic GMP-dependent protein kinase. ISGylated. In terms of tissue distribution, detected in embryos from E8.5-16.5 in cortical ventricular zone, dorsal root ganglia and cerebellar primordia. Isoform 3 is detected in testis and in spermatocytes from newborn mice. Levels increase and reach a maximum after 21 days; after this they decrease again. Long isoforms are widely expressed.

Its subcellular location is the cytoplasm. It is found in the cell membrane. The protein localises to the nucleus. Down-regulates signaling from heterotrimeric G-proteins by increasing the GTPase activity of the alpha subunits, thereby driving them into their inactive GDP-bound form. Down-regulates G-protein-mediated release of inositol phosphates and activation of MAP kinases. The sequence is that of Regulator of G-protein signaling 3 (Rgs3) from Mus musculus (Mouse).